Consider the following 399-residue polypeptide: Dual-specificity RNA methyltransferase RlmN (399 aa).

E120 (proton acceptor) is an active-site residue. One can recognise a Radical SAM core domain in the interval E126–D367. The cysteines at positions 133 and 372 are disulfide-linked. [4Fe-4S] cluster is bound by residues C140, C144, and C147. Residues G198–E199, S230, S252–H254, and N329 contribute to the S-adenosyl-L-methionine site. C372 (S-methylcysteine intermediate) is an active-site residue.

This sequence belongs to the radical SAM superfamily. RlmN family. It depends on [4Fe-4S] cluster as a cofactor.

The protein localises to the cytoplasm. It catalyses the reaction adenosine(2503) in 23S rRNA + 2 reduced [2Fe-2S]-[ferredoxin] + 2 S-adenosyl-L-methionine = 2-methyladenosine(2503) in 23S rRNA + 5'-deoxyadenosine + L-methionine + 2 oxidized [2Fe-2S]-[ferredoxin] + S-adenosyl-L-homocysteine. The enzyme catalyses adenosine(37) in tRNA + 2 reduced [2Fe-2S]-[ferredoxin] + 2 S-adenosyl-L-methionine = 2-methyladenosine(37) in tRNA + 5'-deoxyadenosine + L-methionine + 2 oxidized [2Fe-2S]-[ferredoxin] + S-adenosyl-L-homocysteine. Its function is as follows. Specifically methylates position 2 of adenine 2503 in 23S rRNA and position 2 of adenine 37 in tRNAs. m2A2503 modification seems to play a crucial role in the proofreading step occurring at the peptidyl transferase center and thus would serve to optimize ribosomal fidelity. The chain is Dual-specificity RNA methyltransferase RlmN from Parvibaculum lavamentivorans (strain DS-1 / DSM 13023 / NCIMB 13966).